The chain runs to 315 residues: Phosphatidylglycerol--prolipoprotein diacylglyceryl transferase (315 aa).

2 consecutive transmembrane segments (helical) span residues F19–L39 and V93–L113. R141 lines the a 1,2-diacyl-sn-glycero-3-phospho-(1'-sn-glycerol) pocket. The next 2 membrane-spanning stretches (helical) occupy residues L188–I208 and M256–Y276.

The protein belongs to the Lgt family.

Its subcellular location is the cell membrane. It carries out the reaction L-cysteinyl-[prolipoprotein] + a 1,2-diacyl-sn-glycero-3-phospho-(1'-sn-glycerol) = an S-1,2-diacyl-sn-glyceryl-L-cysteinyl-[prolipoprotein] + sn-glycerol 1-phosphate + H(+). Its pathway is protein modification; lipoprotein biosynthesis (diacylglyceryl transfer). Functionally, catalyzes the transfer of the diacylglyceryl group from phosphatidylglycerol to the sulfhydryl group of the N-terminal cysteine of a prolipoprotein, the first step in the formation of mature lipoproteins. In Bifidobacterium longum subsp. infantis (strain ATCC 15697 / DSM 20088 / JCM 1222 / NCTC 11817 / S12), this protein is Phosphatidylglycerol--prolipoprotein diacylglyceryl transferase.